We begin with the raw amino-acid sequence, 178 residues long: Gluconokinase (178 aa).

An ATP-binding site is contributed by 19–26 (GVSGTGKT).

The protein belongs to the gluconokinase GntK/GntV family. Monomer.

It carries out the reaction D-gluconate + ATP = 6-phospho-D-gluconate + ADP + H(+). The protein operates within carbohydrate acid metabolism; D-gluconate degradation. Activated by magnesium. Phosphorylates gluconate to 6-phosphogluconate. This chain is Gluconokinase, found in Gluconobacter oxydans (strain 621H) (Gluconobacter suboxydans).